Reading from the N-terminus, the 624-residue chain is Phosphoenolpyruvate carboxykinase [GTP] (624 aa).

Substrate-binding positions include Arg88 and 222–224 (YGG). Lys231 and His250 together coordinate Mn(2+). Substrate is bound at residue Ser272. 273–278 (MCGKTS) contributes to the GTP binding site. The active site involves Cys274. Residue Asp291 coordinates Mn(2+). Residue 386–388 (NAR) participates in substrate binding. GTP contacts are provided by Arg388 and Arg420.

Belongs to the phosphoenolpyruvate carboxykinase [GTP] family. Mn(2+) serves as cofactor.

It is found in the cytoplasm. It carries out the reaction oxaloacetate + GTP = phosphoenolpyruvate + GDP + CO2. It participates in carbohydrate biosynthesis; gluconeogenesis. Functionally, catalyzes the conversion of oxaloacetate (OAA) to phosphoenolpyruvate (PEP), the rate-limiting step in the metabolic pathway that produces glucose from lactate and other precursors derived from the citric acid cycle. The polypeptide is Phosphoenolpyruvate carboxykinase [GTP] (Pyrococcus furiosus (strain ATCC 43587 / DSM 3638 / JCM 8422 / Vc1)).